Here is a 204-residue protein sequence, read N- to C-terminus: Holliday junction branch migration complex subunit RuvA (204 aa).

The segment at 1 to 64 (MIGRLRGIIL…EDAQLLYGFN (64 aa)) is domain I. The segment at 65–142 (NKQERALFRE…KGLNGDLFNN (78 aa)) is domain II. The tract at residues 143–155 (TGDISLPTASPQT) is flexible linker. A domain III region spans residues 156–204 (SDADIEAEAASALVALGYKPQEASRLVSKIAKPGADCETLIRDALRAAL).

Belongs to the RuvA family. In terms of assembly, homotetramer. Forms an RuvA(8)-RuvB(12)-Holliday junction (HJ) complex. HJ DNA is sandwiched between 2 RuvA tetramers; dsDNA enters through RuvA and exits via RuvB. An RuvB hexamer assembles on each DNA strand where it exits the tetramer. Each RuvB hexamer is contacted by two RuvA subunits (via domain III) on 2 adjacent RuvB subunits; this complex drives branch migration. In the full resolvosome a probable DNA-RuvA(4)-RuvB(12)-RuvC(2) complex forms which resolves the HJ.

The protein resides in the cytoplasm. Its function is as follows. The RuvA-RuvB-RuvC complex processes Holliday junction (HJ) DNA during genetic recombination and DNA repair, while the RuvA-RuvB complex plays an important role in the rescue of blocked DNA replication forks via replication fork reversal (RFR). RuvA specifically binds to HJ cruciform DNA, conferring on it an open structure. The RuvB hexamer acts as an ATP-dependent pump, pulling dsDNA into and through the RuvAB complex. HJ branch migration allows RuvC to scan DNA until it finds its consensus sequence, where it cleaves and resolves the cruciform DNA. This Yersinia pseudotuberculosis serotype O:1b (strain IP 31758) protein is Holliday junction branch migration complex subunit RuvA.